The chain runs to 398 residues: 4-hydroxy-3-methylbut-2-en-1-yl diphosphate synthase (ferredoxin) (398 aa).

The [4Fe-4S] cluster site is built by C306, C309, C340, and E347.

The protein belongs to the IspG family. The cofactor is [4Fe-4S] cluster.

It carries out the reaction (2E)-4-hydroxy-3-methylbut-2-enyl diphosphate + 2 oxidized [2Fe-2S]-[ferredoxin] + H2O = 2-C-methyl-D-erythritol 2,4-cyclic diphosphate + 2 reduced [2Fe-2S]-[ferredoxin] + H(+). It participates in isoprenoid biosynthesis; isopentenyl diphosphate biosynthesis via DXP pathway; isopentenyl diphosphate from 1-deoxy-D-xylulose 5-phosphate: step 5/6. In terms of biological role, converts 2C-methyl-D-erythritol 2,4-cyclodiphosphate (ME-2,4cPP) into 1-hydroxy-2-methyl-2-(E)-butenyl 4-diphosphate. This is 4-hydroxy-3-methylbut-2-en-1-yl diphosphate synthase (ferredoxin) from Synechococcus sp. (strain CC9605).